The chain runs to 112 residues: uncharacterized protein (112 aa).

This is an uncharacterized protein from Sulfolobus islandicus filamentous virus (isolate Iceland/Hveragerdi) (SIFV).